We begin with the raw amino-acid sequence, 169 residues long: Large ribosomal subunit protein uL10 (169 aa).

This sequence belongs to the universal ribosomal protein uL10 family. As to quaternary structure, part of the ribosomal stalk of the 50S ribosomal subunit. The N-terminus interacts with L11 and the large rRNA to form the base of the stalk. The C-terminus forms an elongated spine to which L12 dimers bind in a sequential fashion forming a multimeric L10(L12)X complex.

Forms part of the ribosomal stalk, playing a central role in the interaction of the ribosome with GTP-bound translation factors. In Deinococcus geothermalis (strain DSM 11300 / CIP 105573 / AG-3a), this protein is Large ribosomal subunit protein uL10.